The following is a 575-amino-acid chain: Reverse gyrse subunit B (575 aa).

An RG N-terminal-type; degenerate zinc finger spans residues 1–39 (MKIYYNNVCPNCSGRISNERLIKGLPCENDYPYEEGTIE). Residues Gln83 and 100-107 (APTGMGKT) contribute to the ATP site. The region spanning 87–247 (FIRAYKGYSF…KLKISGKDLE (161 aa)) is the Helicase ATP-binding domain. Positions 204-207 (DDVD) match the DEAD box motif. The 150-residue stretch at 316–465 (QTLELIKKLG…ALKMVEEAIE (150 aa)) folds into the Helicase C-terminal domain.

Belongs to the DEAD box helicase family. DDVD subfamily. As to quaternary structure, heterodimer of an RgyA and RgyB subunit.

The protein localises to the cytoplasm. It carries out the reaction ATP + H2O = ADP + phosphate + H(+). Its function is as follows. Modifies the topological state of DNA by introducing positive supercoils in an ATP-dependent process. Binds to single-stranded DNA, transiently cleaves and then rejoins the end, introducing a positive supercoil in the process. The scissile phosphodiester is attacked by the catalytic tyrosine of the enzyme, resulting in the formation of a DNA-(5'-phosphotyrosyl)-enzyme intermediate. Probably involved in rewinding DNA strands in regions of the chromosome that have opened up to allow replication, transcription, DNA repair or for DNA protection. Reconstituted holoenzyme binds dsDNA a bit better than ssDNA, this subunit preferentially binds dsDNA. In isolation this subunit has DNA-stimulated ATPase activity that is stimulated by topoisomerase-domain containing RgyA. This subunit inhibits the relaxation activity of the topoisomerase subunit while promoting positive supercoiling. This Nanoarchaeum equitans (strain Kin4-M) protein is Reverse gyrse subunit B.